Reading from the N-terminus, the 711-residue chain is Constitutive ornithine decarboxylase (711 aa).

N6-(pyridoxal phosphate)lysine is present on Lys347.

It belongs to the Orn/Lys/Arg decarboxylase class-I family. Requires pyridoxal 5'-phosphate as cofactor.

The catalysed reaction is L-ornithine + H(+) = putrescine + CO2. It participates in amine and polyamine biosynthesis; putrescine biosynthesis via L-ornithine pathway; putrescine from L-ornithine: step 1/1. The polypeptide is Constitutive ornithine decarboxylase (speC) (Escherichia coli (strain K12)).